We begin with the raw amino-acid sequence, 347 residues long: Heat-inducible transcription repressor HrcA (347 aa).

It belongs to the HrcA family.

Its function is as follows. Negative regulator of class I heat shock genes (grpE-dnaK-dnaJ and groELS operons). Prevents heat-shock induction of these operons. This Lactococcus lactis subsp. lactis (strain IL1403) (Streptococcus lactis) protein is Heat-inducible transcription repressor HrcA.